A 143-amino-acid chain; its full sequence is Synuclein (143 aa).

Repeat copies occupy residues 20-30 (EKTKQGVQDAA), 31-41 (EKTKQGVQDAA), and 42-52 (EKTKEGVMYVG). Positions 20-78 (EKTKQGVQDAAEKTKQGVQDAAEKTKEGVMYVGTKTKEGVVQSVNTVTEKTKEQANVVG) are 5 X 11 AA tandem repeats of [EGST]-K-T-K-[EQ]-[GQ]-[VA]-X(4). Residues 53 to 67 (TKTKEGVVQSVNTVT) form a 4; approximate repeat. Residues 68–78 (EKTKEQANVVG) form repeat 5. A disordered region spans residues 113–143 (REIPAEQVAEGKQTTQEPLVEATEATEETGK).

Belongs to the synuclein family. In terms of tissue distribution, nervous system tissue. Found in the electric lobe, the brain and the spinal cord.

The protein localises to the nucleus. May have a role in synaptic regulation or signal transduction. This Tetronarce californica (Pacific electric ray) protein is Synuclein.